The sequence spans 595 residues: GPI mannosyltransferase 3 (595 aa).

The next 10 helical transmembrane spans lie at 58 to 78 (YAFP…GVAT), 85 to 105 (LAHA…GVAA), 128 to 148 (GPRV…VLLV), 185 to 207 (FFAT…LYHW), 212 to 232 (GLDV…FACL), 235 to 255 (PTNV…LVRS), 260 to 280 (LLLT…CANI), 289 to 309 (GVLL…LAAF), 319 to 339 (LLQS…GALL), and 413 to 433 (VQSL…VLNT).

The protein belongs to the glycosyltransferase 22 family. PIGB subfamily.

Its subcellular location is the endoplasmic reticulum membrane. It functions in the pathway glycolipid biosynthesis; glycosylphosphatidylinositol-anchor biosynthesis. Functionally, mannosyltransferase involved in glycosylphosphatidylinositol-anchor biosynthesis. Transfers the third mannose to Man2-GlcN-acyl-PI during GPI precursor assembly. The chain is GPI mannosyltransferase 3 (GPI10) from Eremothecium gossypii (strain ATCC 10895 / CBS 109.51 / FGSC 9923 / NRRL Y-1056) (Yeast).